We begin with the raw amino-acid sequence, 473 residues long: Glutathione reductase, mitochondrial (473 aa).

FAD contacts are provided by serine 30 and glycine 31. Residue serine 30 participates in glutathione binding. Arginine 37 lines the glutathione pocket. FAD contacts are provided by glutamate 50, threonine 57, cysteine 58, and lysine 66. An intrachain disulfide couples cysteine 58 to cysteine 63. Position 114 (tyrosine 114) interacts with glutathione. Residue alanine 130 coordinates FAD. 6 residues coordinate NADP(+): alanine 190, isoleucine 193, glutamate 196, arginine 213, arginine 219, and glycine 279. Aspartate 320 serves as a coordination point for FAD. Leucine 326 is a binding site for NADP(+). Threonine 328 provides a ligand contact to FAD. Glutathione is bound at residue arginine 336. Valine 359 contributes to the NADP(+) binding site. Histidine 456 lines the FAD pocket. Residue histidine 456 is the Proton acceptor of the active site.

The protein belongs to the class-I pyridine nucleotide-disulfide oxidoreductase family. FAD serves as cofactor. As to expression, expressed at all larval stages and in adults in intestine, vulva muscle, pharynx and some cells in the tail.

It localises to the cytoplasm. Its subcellular location is the mitochondrion. It carries out the reaction 2 glutathione + NADP(+) = glutathione disulfide + NADPH + H(+). Functionally, catalyzes the reduction of glutathione disulfide (GSSG) to reduced glutathione (GSH). Constitutes the major mechanism to maintain a high GSH:GSSG ratio in the cytosol. Involved in resistance to oxidative stress and starvation. Together with thioredoxin reductase txtr-1, required for the reduction of disulfide groups in the cuticle during molting. This Caenorhabditis elegans protein is Glutathione reductase, mitochondrial.